An 883-amino-acid polypeptide reads, in one-letter code: Protein P (883 aa).

A terminal protein domain (TP) region spans residues 1–183 (MHPFSRLFRN…GKPYSWEHRQ (183 aa)). Residues 184–386 (LVQHNGQQHK…YCIHHIVSSL (203 aa)) are spacer. Residues 298 to 344 (RNSGHTTWFSSASNSNKSRSREKAYSSNSTSKRYSPPLNYEKSDFSS) are disordered. The interval 387 to 728 (DDWGPCTVTG…YEELWPVVRQ (342 aa)) is polymerase/reverse transcriptase domain (RT). The 242-residue stretch at 397 to 638 (DVTIKSPRTP…NHLHFMGYVI (242 aa)) folds into the Reverse transcriptase domain. Mg(2+) contacts are provided by Asp469, Asp589, and Asp590.

Belongs to the hepadnaviridae P protein family.

The enzyme catalyses DNA(n) + a 2'-deoxyribonucleoside 5'-triphosphate = DNA(n+1) + diphosphate. The catalysed reaction is Endonucleolytic cleavage to 5'-phosphomonoester.. With respect to regulation, activated by host HSP70 and HSP40 in vitro to be able to bind the epsilon loop of the pgRNA. Because deletion of the RNase H region renders the protein partly chaperone-independent, the chaperones may be needed indirectly to relieve occlusion of the RNA-binding site by this domain. Inhibited by several reverse-transcriptase inhibitors: Lamivudine, Adefovir and Entecavir. Functionally, multifunctional enzyme that converts the viral RNA genome into dsDNA in viral cytoplasmic capsids. This enzyme displays a DNA polymerase activity that can copy either DNA or RNA templates, and a ribonuclease H (RNase H) activity that cleaves the RNA strand of RNA-DNA heteroduplexes in a partially processive 3'- to 5'-endonucleasic mode. Neo-synthesized pregenomic RNA (pgRNA) are encapsidated together with the P protein, and reverse-transcribed inside the nucleocapsid. Initiation of reverse-transcription occurs first by binding the epsilon loop on the pgRNA genome, and is initiated by protein priming, thereby the 5'-end of (-)DNA is covalently linked to P protein. Partial (+)DNA is synthesized from the (-)DNA template and generates the relaxed circular DNA (RC-DNA) genome. After budding and infection, the RC-DNA migrates in the nucleus, and is converted into a plasmid-like covalently closed circular DNA (cccDNA). The activity of P protein does not seem to be necessary for cccDNA generation, and is presumably released from (+)DNA by host nuclear DNA repair machinery. In Woodchuck hepatitis B virus (isolate 2) (WHV), this protein is Protein P.